The primary structure comprises 366 residues: Outer membrane protein IIIA (366 aa).

Positions 1–22 (MNIRMVLLASAAAFAASTPVLA) are cleaved as a signal peptide.

Belongs to the alphaproteobacteria porin family. Forms calcium-stabilized oligomers. Post-translationally, attached covalently to peptidoglycan.

The protein localises to the cell outer membrane. In terms of biological role, may act as an outer membrane pore. The sequence is that of Outer membrane protein IIIA (ropA) from Rhizobium leguminosarum bv. viciae.